The primary structure comprises 155 residues: DNA-directed RNA polymerase 1A (155 aa).

Asp88 is an active-site residue.

The protein belongs to the phage and mitochondrial RNA polymerase family.

It catalyses the reaction RNA(n) + a ribonucleoside 5'-triphosphate = RNA(n+1) + diphosphate. Functionally, DNA-dependent RNA polymerase catalyzes the transcription of DNA into RNA using the four ribonucleoside triphosphates as substrates. The protein is DNA-directed RNA polymerase 1A (RPOT1-SYL) of Nicotiana tabacum (Common tobacco).